We begin with the raw amino-acid sequence, 262 residues long: Sugar fermentation stimulation protein homolog (262 aa).

This sequence belongs to the SfsA family.

This is Sugar fermentation stimulation protein homolog from Lawsonia intracellularis (strain PHE/MN1-00).